A 246-amino-acid chain; its full sequence is Glucosamine-6-phosphate deaminase (246 aa).

Catalysis depends on aspartate 67, which acts as the Proton acceptor; for enolization step. Residue asparagine 136 is the For ring-opening step of the active site. Histidine 138 functions as the Proton acceptor; for ring-opening step in the catalytic mechanism. Residue glutamate 143 is the For ring-opening step of the active site.

This sequence belongs to the glucosamine/galactosamine-6-phosphate isomerase family. NagB subfamily.

The enzyme catalyses alpha-D-glucosamine 6-phosphate + H2O = beta-D-fructose 6-phosphate + NH4(+). The protein operates within amino-sugar metabolism; N-acetylneuraminate degradation; D-fructose 6-phosphate from N-acetylneuraminate: step 5/5. Functionally, catalyzes the reversible isomerization-deamination of glucosamine 6-phosphate (GlcN6P) to form fructose 6-phosphate (Fru6P) and ammonium ion. This is Glucosamine-6-phosphate deaminase from Halalkalibacterium halodurans (strain ATCC BAA-125 / DSM 18197 / FERM 7344 / JCM 9153 / C-125) (Bacillus halodurans).